A 95-amino-acid polypeptide reads, in one-letter code: Aspartyl/glutamyl-tRNA(Asn/Gln) amidotransferase subunit C (95 aa).

The protein belongs to the GatC family. As to quaternary structure, heterotrimer of A, B and C subunits.

The catalysed reaction is L-glutamyl-tRNA(Gln) + L-glutamine + ATP + H2O = L-glutaminyl-tRNA(Gln) + L-glutamate + ADP + phosphate + H(+). It catalyses the reaction L-aspartyl-tRNA(Asn) + L-glutamine + ATP + H2O = L-asparaginyl-tRNA(Asn) + L-glutamate + ADP + phosphate + 2 H(+). Its function is as follows. Allows the formation of correctly charged Asn-tRNA(Asn) or Gln-tRNA(Gln) through the transamidation of misacylated Asp-tRNA(Asn) or Glu-tRNA(Gln) in organisms which lack either or both of asparaginyl-tRNA or glutaminyl-tRNA synthetases. The reaction takes place in the presence of glutamine and ATP through an activated phospho-Asp-tRNA(Asn) or phospho-Glu-tRNA(Gln). The polypeptide is Aspartyl/glutamyl-tRNA(Asn/Gln) amidotransferase subunit C (Beijerinckia indica subsp. indica (strain ATCC 9039 / DSM 1715 / NCIMB 8712)).